A 115-amino-acid polypeptide reads, in one-letter code: Large ribosomal subunit protein bL19 (115 aa).

This sequence belongs to the bacterial ribosomal protein bL19 family.

Functionally, this protein is located at the 30S-50S ribosomal subunit interface and may play a role in the structure and function of the aminoacyl-tRNA binding site. This is Large ribosomal subunit protein bL19 from Edwardsiella ictaluri (strain 93-146).